We begin with the raw amino-acid sequence, 152 residues long: Large ribosomal subunit protein uL13 (152 aa).

Residues 129-152 (EHPHEAQSPEVLDVKSMNKKNTRS) form a disordered region.

This sequence belongs to the universal ribosomal protein uL13 family. As to quaternary structure, part of the 50S ribosomal subunit.

Its function is as follows. This protein is one of the early assembly proteins of the 50S ribosomal subunit, although it is not seen to bind rRNA by itself. It is important during the early stages of 50S assembly. The sequence is that of Large ribosomal subunit protein uL13 from Ruegeria sp. (strain TM1040) (Silicibacter sp.).